A 527-amino-acid chain; its full sequence is Glutamate--cysteine ligase (527 aa).

The protein belongs to the glutamate--cysteine ligase type 1 family. Type 1 subfamily.

It carries out the reaction L-cysteine + L-glutamate + ATP = gamma-L-glutamyl-L-cysteine + ADP + phosphate + H(+). It participates in sulfur metabolism; glutathione biosynthesis; glutathione from L-cysteine and L-glutamate: step 1/2. This chain is Glutamate--cysteine ligase, found in Pseudomonas aeruginosa (strain ATCC 15692 / DSM 22644 / CIP 104116 / JCM 14847 / LMG 12228 / 1C / PRS 101 / PAO1).